The primary structure comprises 139 residues: ATP synthase epsilon chain (139 aa).

Belongs to the ATPase epsilon chain family. As to quaternary structure, F-type ATPases have 2 components, CF(1) - the catalytic core - and CF(0) - the membrane proton channel. CF(1) has five subunits: alpha(3), beta(3), gamma(1), delta(1), epsilon(1). CF(0) has three main subunits: a, b and c.

The protein localises to the cell membrane. Functionally, produces ATP from ADP in the presence of a proton gradient across the membrane. This chain is ATP synthase epsilon chain, found in Streptococcus pneumoniae serotype 2 (strain D39 / NCTC 7466).